The following is a 601-amino-acid chain: Casbene synthase, chloroplastic (601 aa).

The N-terminal 56 residues, 1 to 56 (MALPSAAMQSNPEKLNLFHRLSSLPTTSLEYGNNRFPFFSSSAKSHFKKPTQACLS), are a transit peptide targeting the chloroplast. 5 residues coordinate Mg(2+): aspartate 355, aspartate 359, asparagine 499, serine 503, and glutamate 507. Positions 355 to 359 (DDTID) match the DDXXD motif motif.

The protein belongs to the terpene synthase family. Requires Mg(2+) as cofactor.

The protein localises to the plastid. Its subcellular location is the chloroplast. The catalysed reaction is (2E,6E,10E)-geranylgeranyl diphosphate = casbene + diphosphate. Catalyzes the cyclization of geranylgeranyl diphosphate to casbene, a diterpene phytoalexin with antibacterial and antifungal activity. This chain is Casbene synthase, chloroplastic, found in Ricinus communis (Castor bean).